Consider the following 156-residue polypeptide: MQANKNQDELVKTFKAILKEERFGSQSEIVNALQSEGFNNINQSKVSRMLSKFGAVRTRNAKQEMVYCLPAELGVPTAGSPLKNLVLDVDHNQSMIVVRTSPGAAQLIARLLDSIGKPEGILGTIAGDDTIFICPSNIQEVDKTLETVKSLFNYAD.

Belongs to the ArgR family.

The protein localises to the cytoplasm. It participates in amino-acid biosynthesis; L-arginine biosynthesis [regulation]. Its function is as follows. Regulates arginine biosynthesis genes. This chain is Arginine repressor, found in Shewanella loihica (strain ATCC BAA-1088 / PV-4).